The primary structure comprises 263 residues: Protein YpjB (263 aa).

Over residues 233–244 (DFDDSSSEDDPV) the composition is skewed to acidic residues. The tract at residues 233–263 (DFDDSSSEDDPVENSPVVTSPVVSSSKSSFQ) is disordered. The segment covering 245 to 263 (ENSPVVTSPVVSSSKSSFQ) has biased composition (low complexity).

This is Protein YpjB (ypjB) from Escherichia coli (strain K12).